We begin with the raw amino-acid sequence, 197 residues long: Recombination protein RecR (197 aa).

The segment at 57 to 72 (CSVCFGITEDDPCRFC) adopts a C4-type zinc-finger fold. The 96-residue stretch at 79 to 174 (GAICVVEEPQ…RVTRLAHGIP (96 aa)) folds into the Toprim domain.

This sequence belongs to the RecR family.

Functionally, may play a role in DNA repair. It seems to be involved in an RecBC-independent recombinational process of DNA repair. It may act with RecF and RecO. The polypeptide is Recombination protein RecR (Geobacter sulfurreducens (strain ATCC 51573 / DSM 12127 / PCA)).